The chain runs to 63 residues: Cytochrome c oxidase subunit 7C, mitochondrial (63 aa).

The N-terminal 16 residues, 1–16 (MLGQSIRRFTTSVVRR), are a transit peptide targeting the mitochondrion. Residues 17 to 33 (SHYEEGPGKNLPFSVEN) lie on the Mitochondrial matrix side of the membrane. K25 is modified (N6-acetyllysine; alternate). Residue K25 is modified to N6-succinyllysine; alternate. The chain crosses the membrane as a helical span at residues 34 to 60 (KWRLLLMMTVYFGSGFAAPFFIVRHQL). The Mitochondrial intermembrane segment spans residues 61–63 (LKK).

It belongs to the cytochrome c oxidase VIIc family. In terms of assembly, component of the cytochrome c oxidase (complex IV, CIV), a multisubunit enzyme composed of 14 subunits. The complex is composed of a catalytic core of 3 subunits MT-CO1, MT-CO2 and MT-CO3, encoded in the mitochondrial DNA, and 11 supernumerary subunits COX4I, COX5A, COX5B, COX6A, COX6B, COX6C, COX7A, COX7B, COX7C, COX8 and NDUFA4, which are encoded in the nuclear genome. The complex exists as a monomer or a dimer and forms supercomplexes (SCs) in the inner mitochondrial membrane with NADH-ubiquinone oxidoreductase (complex I, CI) and ubiquinol-cytochrome c oxidoreductase (cytochrome b-c1 complex, complex III, CIII), resulting in different assemblies (supercomplex SCI(1)III(2)IV(1) and megacomplex MCI(2)III(2)IV(2)). Interacts with RAB5IF.

The protein resides in the mitochondrion inner membrane. It functions in the pathway energy metabolism; oxidative phosphorylation. Functionally, component of the cytochrome c oxidase, the last enzyme in the mitochondrial electron transport chain which drives oxidative phosphorylation. The respiratory chain contains 3 multisubunit complexes succinate dehydrogenase (complex II, CII), ubiquinol-cytochrome c oxidoreductase (cytochrome b-c1 complex, complex III, CIII) and cytochrome c oxidase (complex IV, CIV), that cooperate to transfer electrons derived from NADH and succinate to molecular oxygen, creating an electrochemical gradient over the inner membrane that drives transmembrane transport and the ATP synthase. Cytochrome c oxidase is the component of the respiratory chain that catalyzes the reduction of oxygen to water. Electrons originating from reduced cytochrome c in the intermembrane space (IMS) are transferred via the dinuclear copper A center (CU(A)) of subunit 2 and heme A of subunit 1 to the active site in subunit 1, a binuclear center (BNC) formed by heme A3 and copper B (CU(B)). The BNC reduces molecular oxygen to 2 water molecules using 4 electrons from cytochrome c in the IMS and 4 protons from the mitochondrial matrix. The chain is Cytochrome c oxidase subunit 7C, mitochondrial (Cox7c) from Rattus norvegicus (Rat).